The sequence spans 284 residues: Bifunctional protein FolD (284 aa).

Residues 166-168 (GAS), Ser191, and Ile232 contribute to the NADP(+) site.

This sequence belongs to the tetrahydrofolate dehydrogenase/cyclohydrolase family. As to quaternary structure, homodimer.

It carries out the reaction (6R)-5,10-methylene-5,6,7,8-tetrahydrofolate + NADP(+) = (6R)-5,10-methenyltetrahydrofolate + NADPH. It catalyses the reaction (6R)-5,10-methenyltetrahydrofolate + H2O = (6R)-10-formyltetrahydrofolate + H(+). Its pathway is one-carbon metabolism; tetrahydrofolate interconversion. Functionally, catalyzes the oxidation of 5,10-methylenetetrahydrofolate to 5,10-methenyltetrahydrofolate and then the hydrolysis of 5,10-methenyltetrahydrofolate to 10-formyltetrahydrofolate. The polypeptide is Bifunctional protein FolD (Neisseria gonorrhoeae (strain ATCC 700825 / FA 1090)).